Here is a 156-residue protein sequence, read N- to C-terminus: Ribonuclease H (156 aa).

The 142-residue stretch at 3 to 144 (ELKLIHIFTD…CDVLARTAAE (142 aa)) folds into the RNase H type-1 domain. Positions 12, 50, 72, and 136 each coordinate Mg(2+).

The protein belongs to the RNase H family. Monomer. Requires Mg(2+) as cofactor.

Its subcellular location is the cytoplasm. It catalyses the reaction Endonucleolytic cleavage to 5'-phosphomonoester.. In terms of biological role, endonuclease that specifically degrades the RNA of RNA-DNA hybrids. This is Ribonuclease H from Shewanella baltica (strain OS223).